The primary structure comprises 263 residues: Regulatory protein RecX (263 aa).

This sequence belongs to the RecX family.

It localises to the cytoplasm. In terms of biological role, modulates RecA activity. The protein is Regulatory protein RecX of Bacillus velezensis (strain DSM 23117 / BGSC 10A6 / LMG 26770 / FZB42) (Bacillus amyloliquefaciens subsp. plantarum).